A 123-amino-acid chain; its full sequence is Venom peptide MmKTx1 (123 aa).

An N-terminal signal peptide occupies residues M1–G21.

It belongs to the scorpion La1-like peptide family. In terms of processing, contains 4 disulfide bonds. In terms of tissue distribution, expressed by the venom gland.

Its subcellular location is the secreted. The protein is Venom peptide MmKTx1 of Olivierus martensii (Manchurian scorpion).